The sequence spans 179 residues: Large ribosomal subunit protein uL5 (179 aa).

The protein belongs to the universal ribosomal protein uL5 family. As to quaternary structure, part of the 50S ribosomal subunit; part of the 5S rRNA/L5/L18/L25 subcomplex. Contacts the 5S rRNA and the P site tRNA. Forms a bridge to the 30S subunit in the 70S ribosome.

Its function is as follows. This is one of the proteins that bind and probably mediate the attachment of the 5S RNA into the large ribosomal subunit, where it forms part of the central protuberance. In the 70S ribosome it contacts protein S13 of the 30S subunit (bridge B1b), connecting the 2 subunits; this bridge is implicated in subunit movement. Contacts the P site tRNA; the 5S rRNA and some of its associated proteins might help stabilize positioning of ribosome-bound tRNAs. The chain is Large ribosomal subunit protein uL5 from Pseudomonas entomophila (strain L48).